A 176-amino-acid chain; its full sequence is Scytalone dehydratase-like protein AacuK (176 aa).

Substrate contacts are provided by Y26 and Y46. Catalysis depends on residues H81 and H107.

This sequence belongs to the scytalone dehydratase family.

Its pathway is secondary metabolite biosynthesis. In terms of biological role, scytalone dehydratase-like protein; part of the gene cluster that mediates the biosynthesis of the tetrahydroxanthone dimer secalonic acid D. The pathway begins with the synthesis of atrochrysone thioester by the polyketide synthase AacuL. The atrochrysone carboxyl ACP thioesterase AacuM then breaks the thioester bond and releases the atrochrysone carboxylic acid from AacuL. Atrochrysone carboxylic acid is decarboxylated by the decarboxylase AacuI, and oxidized by the anthrone oxygenase AacuG to yield emodin. Emodin is then reduced to emodin hydroquinone by a yet unidentified oxidoreductase. A-ring reduction by the short chain dehydrogenase AacuN, dehydration by the scytalone dehydratase-like protein AacuK and probable spontaneous re-oxidation, results in overall deoxygenation to chrysophanol. Baeyer-Villiger oxidation by the Baeyer-Villiger monooxygenase (BVMO) AacuH then yields monodictyphenone. Monodictyphenone is transformed into compounds with the tetrahydroxanthone skeleton via methylesterification by the methyltransferase AacuQ, followed by the action of the flavin-dependent monooxygenase AacuC, the isomerase AacuP, and the short chain dehydrogenase/reductase AacuF or AacuD. AacuF and AacuD should accept the same compound as a substrate but perform the ketoreduction with a different stereoselectivity, thus yielding blennolides B and A, respectively. In the final step of the biosynthesis, the cytochrome P450 monooxygenase AacuE accepts blennolide B and/or blennolide A to conduct the dimerization reaction to furnish the tetrahydroxanthone dimers, secalonic acids D, B, and F. In Aspergillus aculeatus (strain ATCC 16872 / CBS 172.66 / WB 5094), this protein is Scytalone dehydratase-like protein AacuK.